The chain runs to 90 residues: Lectin-1 (90 aa).

A Pyrrolidone carboxylic acid modification is found at glutamine 1. A disulfide bridge connects residues cysteine 46 and cysteine 71.

The N-terminus is blocked. In terms of processing, contains seven disulfide bonds. Post-translationally, proteolytically cleaved. Major form may consist of cleaved, disulfide-bonded subunits.

Functionally, lectin with specificity for complex N-linked glycans and O-linked glycans. Has hemagglutinating activity towards rabbit erythrocytes that is inhibited by N-acetyl-D-galactosamine. This chain is Lectin-1, found in Hypnea cervicornis (Brazilian red alga).